The sequence spans 1187 residues: Nicotinate dehydrogenase subunit B (1187 aa).

A helical membrane pass occupies residues 764-784 (WWFGSLAGVFGAALGMLATAL). Cytochrome c domains follow at residues 804-907 (AMLE…MSQT), 949-1057 (AQWN…SSLE), and 1075-1163 (VSLS…RHRF). Residues cysteine 818, cysteine 821, histidine 822, cysteine 964, cysteine 967, histidine 968, cysteine 1088, cysteine 1091, and histidine 1092 each coordinate heme c.

Mo-molybdopterin cytosine dinucleotide serves as cofactor.

Its subcellular location is the membrane. The enzyme catalyses 2 Fe(III)-[cytochrome] + nicotinate + H2O = 2 Fe(II)-[cytochrome] + 6-hydroxynicotinate + 2 H(+). Its pathway is cofactor degradation; nicotinate degradation. Its function is as follows. Subunit of the two-component enzyme NicAB that mediates nicotinate hydroxylation, the first step in the aerobic nicotinate degradation pathway. Mediates conversion of nicotinate into 6-hydroxynicotinate (6HNA). This is Nicotinate dehydrogenase subunit B (nicB) from Pseudomonas putida (strain ATCC 47054 / DSM 6125 / CFBP 8728 / NCIMB 11950 / KT2440).